A 1026-amino-acid chain; its full sequence is Multidrug resistance protein MdtC (1026 aa).

Transmembrane regions (helical) follow at residues I15–A35, E333–L353, L360–C380, L387–L407, V431–L451, F463–P483, L528–P548, L853–S873, L897–V917, P953–G973, and I984–V1004.

This sequence belongs to the resistance-nodulation-cell division (RND) (TC 2.A.6) family. MdtC subfamily. In terms of assembly, part of a tripartite efflux system composed of MdtA, MdtB and MdtC. MdtC forms a heteromultimer with MdtB.

The protein resides in the cell inner membrane. The sequence is that of Multidrug resistance protein MdtC from Salmonella newport (strain SL254).